Consider the following 21-residue polypeptide: Nucleoside diphosphate kinase (21 aa).

The active-site Pros-phosphohistidine intermediate is H4.

The protein belongs to the NDK family. Homohexamer. The cofactor is Mg(2+).

The protein localises to the cytoplasm. The catalysed reaction is a 2'-deoxyribonucleoside 5'-diphosphate + ATP = a 2'-deoxyribonucleoside 5'-triphosphate + ADP. It catalyses the reaction a ribonucleoside 5'-diphosphate + ATP = a ribonucleoside 5'-triphosphate + ADP. In terms of biological role, major role in the synthesis of nucleoside triphosphates other than ATP. The ATP gamma phosphate is transferred to the NDP beta phosphate via a ping-pong mechanism, using a phosphorylated active-site intermediate. This Candida albicans (Yeast) protein is Nucleoside diphosphate kinase (NDK1).